The chain runs to 557 residues: Glucose-6-phosphate isomerase (557 aa).

The active-site Proton donor is the Glu-359. Residues His-390 and Lys-518 contribute to the active site.

The protein belongs to the GPI family.

It localises to the cytoplasm. It catalyses the reaction alpha-D-glucose 6-phosphate = beta-D-fructose 6-phosphate. It functions in the pathway carbohydrate biosynthesis; gluconeogenesis. It participates in carbohydrate degradation; glycolysis; D-glyceraldehyde 3-phosphate and glycerone phosphate from D-glucose: step 2/4. In terms of biological role, catalyzes the reversible isomerization of glucose-6-phosphate to fructose-6-phosphate. This chain is Glucose-6-phosphate isomerase, found in Hahella chejuensis (strain KCTC 2396).